The following is a 22-amino-acid chain: Superoxide dismutase [Cu-Zn] (22 aa).

It belongs to the Cu-Zn superoxide dismutase family. As to quaternary structure, homodimer. Cu cation serves as cofactor. Requires Zn(2+) as cofactor.

The protein localises to the cytoplasm. It carries out the reaction 2 superoxide + 2 H(+) = H2O2 + O2. Its function is as follows. Destroys radicals which are normally produced within the cells and which are toxic to biological systems. The chain is Superoxide dismutase [Cu-Zn] from Hordeum vulgare (Barley).